Reading from the N-terminus, the 278-residue chain is Indole-3-glycerol phosphate synthase (278 aa).

Belongs to the TrpC family.

It carries out the reaction 1-(2-carboxyphenylamino)-1-deoxy-D-ribulose 5-phosphate + H(+) = (1S,2R)-1-C-(indol-3-yl)glycerol 3-phosphate + CO2 + H2O. Its pathway is amino-acid biosynthesis; L-tryptophan biosynthesis; L-tryptophan from chorismate: step 4/5. In Pseudomonas fluorescens (strain Pf0-1), this protein is Indole-3-glycerol phosphate synthase.